Reading from the N-terminus, the 112-residue chain is Prothymosin alpha-B (112 aa).

The disordered stretch occupies residues methionine 1–aspartate 112. A compositionally biased stretch (basic and acidic residues) spans serine 9–proline 35. Acidic residues-rich tracts occupy residues glutamate 41–glutamate 83 and glutamate 92–valine 101. The span at glutamate 102–aspartate 112 shows a compositional bias: basic and acidic residues.

It belongs to the pro/parathymosin family.

It localises to the nucleus. The chain is Prothymosin alpha-B (ptma-b) from Xenopus laevis (African clawed frog).